The following is a 483-amino-acid chain: Isocitrate dehydrogenase [NADP] (483 aa).

T74 is an NADP(+) binding site. Positions 83, 85, 89, 99, and 121 each coordinate D-threo-isocitrate. Residue D232 coordinates Mg(2+). NADP(+) contacts are provided by residues 264–270 (HGSAPDI) and N277.

It belongs to the isocitrate and isopropylmalate dehydrogenases family. As to quaternary structure, homodimer. It depends on Mg(2+) as a cofactor. Mn(2+) serves as cofactor.

It carries out the reaction D-threo-isocitrate + NADP(+) = 2-oxoglutarate + CO2 + NADPH. Functionally, catalyzes the oxidative decarboxylation of isocitrate to 2-oxoglutarate and carbon dioxide with the concomitant reduction of NADP(+). In Rickettsia typhi (strain ATCC VR-144 / Wilmington), this protein is Isocitrate dehydrogenase [NADP] (icd).